The sequence spans 756 residues: U3 small nucleolar RNA-associated protein 14 homolog B (756 aa).

The interval 21-44 (DLPENYPLSTSEDEGDSDGEGKRQ) is disordered. 3 positions are modified to phosphoserine: S29, S31, and S37. Coiled-coil stretches lie at residues 215 to 244 (SLEE…RREK) and 316 to 345 (PEAR…SEEE). 2 stretches are compositionally biased toward basic and acidic residues: residues 419-428 (KERSFQERVD) and 452-468 (LNKE…SSEE). Disordered regions lie at residues 419 to 468 (KERS…SSEE) and 497 to 539 (QQGE…KKKK). Residues 449-476 (LQKLNKESHQSDNQKVSSEENVLHIQRE) are a coiled coil. S554 carries the phosphoserine modification.

It belongs to the UTP14 family. In terms of tissue distribution, expressed predominantly in germ cells of the testis; weakly expressed in brain.

The protein resides in the nucleus. Its subcellular location is the nucleolus. Essential for spermatogenesis. May be required specifically for ribosome biogenesis and hence protein synthesis during male meiosis. This is U3 small nucleolar RNA-associated protein 14 homolog B (Utp14b) from Mus musculus (Mouse).